A 560-amino-acid chain; its full sequence is uncharacterized protein (560 aa).

Residues 1–281 (MLWNWVALVG…LGSFFHVAMN (281 aa)) enclose the ABC transmembrane type-1 domain. Transmembrane regions (helical) follow at residues 2-22 (LWNW…SYIL), 32-52 (LLSA…RAFA), 108-128 (IYFG…LTLF), 138-160 (TAII…NKIA), 168-188 (WSIY…LITL), 223-243 (VSLM…TALL), and 249-269 (QLSV…FIPL). The 234-residue stretch at 314 to 547 (VEIKDLHFSY…QGAYAEMFQQ (234 aa)) folds into the ABC transporter domain. Residue 347 to 354 (GKSGCGKS) coordinates ATP.

It belongs to the ABC transporter superfamily.

It localises to the cell inner membrane. This is an uncharacterized protein from Haemophilus influenzae (strain ATCC 51907 / DSM 11121 / KW20 / Rd).